The primary structure comprises 347 residues: Protein YIPF3 (347 aa).

The tract at residues 1–31 is disordered; it reads MATPAAPASGVRNGAGPEWGGFEENIQGGGS. Ala2 bears the N-acetylalanine; in Protein YIPF3, N-terminally processed mark. The Cytoplasmic portion of the chain corresponds to 2–145; it reads ATPAAPASGV…PIKMVNFPQK (144 aa). Residues 146 to 166 traverse the membrane as a helical segment; the sequence is VAGELYGPLMLVFTLVAILLH. The Lumenal portion of the chain corresponds to 167–184; the sequence is GMKTSDTIIREGTLMGTA. Residues 185 to 205 traverse the membrane as a helical segment; sequence IGTCFGYWLGVSSFIYFLAYL. Residues 206–211 lie on the Cytoplasmic side of the membrane; that stretch reads CNAQIT. The chain crosses the membrane as a helical span at residues 212–234; that stretch reads MLQMLALLGYGLFGHCIVLFITY. The Lumenal segment spans residues 235–237; sequence NIH. The chain crosses the membrane as a helical span at residues 238–260; that stretch reads LHALFYLFWLLVGGLSTLRMVAV. Residues 261-271 are Cytoplasmic-facing; sequence LVSRTVGPTQR. The chain crosses the membrane as a helical span at residues 272-292; the sequence is LLLCGTLAALHMLFLLYLHFA. The Lumenal portion of the chain corresponds to 293–347; it reads YHKVVEGILDTLEGPNIPPMQRVPRDIPAVLPAARLPVAVINATAKAIAVTLQSH. The N-linked (GlcNAc...) asparagine glycan is linked to Asn334.

This sequence belongs to the YIP1 family. As to quaternary structure, interacts with YIPF4 and YIPF5. Expressed by splenocytes (at protein level).

Its subcellular location is the cell membrane. The protein localises to the golgi apparatus. The protein resides in the cis-Golgi network membrane. It is found in the cytoplasm. Functionally, involved in the maintenance of the Golgi structure. May play a role in hematopoiesis. The protein is Protein YIPF3 (Yipf3) of Mus musculus (Mouse).